A 1084-amino-acid polypeptide reads, in one-letter code: Transcription elongation factor SPT5 (1084 aa).

The interval 1–91 (MSDSEDSDFS…DDEYEDEDPW (91 aa)) is disordered. Composition is skewed to acidic residues over residues 20–32 (AEEVEENEEEEEQ), 41–62 (AEEEGEDLEDEEEYDEEEEEDD), and 77–91 (DEADVDDEYEDEDPW). The interval 175–269 (DPNLWTVKCK…TDVLKVVKEV (95 aa)) is interaction with SUPT4H1. KOW domains are found at residues 272-305 (LKPKSWVRLKRGLYKDDIAQVDYVEPSQNTISLK), 419-450 (LQAGDNVEVCEGELINLQGKILSVDGNKITIM), 471-502 (FRMGDHVKVIAGRYEGDTGLIVRVEENFVILF), and 593-626 (IHVKDIVKVIDGPHSGREGEIRHIFRGFAFLHCK). The tract at residues 312-419 (LDRIKARMSM…TTGKEREHNL (108 aa)) is interaction with RNA polymerase II. Position 665 is a phosphoserine (Ser665). A disordered region spans residues 667 to 700 (RISSPMHPGGGGQPQRGGGGGGGGGMGRGRGRRD). A compositionally biased stretch (gly residues) spans 674-694 (PGGGGQPQRGGGGGGGGGMGR). Residues 702–735 (DLIGQTVRISQGPYKGYIGVVKDATESTARVELH) form the KOW 5 domain. Residues 748–973 (LTTVGGKERQ…HTPGSNIDQA (226 aa)) form a disordered region. The stretch at 758–763 (GRSSTH) is one CTR1-1; approximate repeat. The tract at residues 758-815 (GRSSTHLRTPMYGSQTPIYGTGSRTPMYGSQTPLHDGSRTPHYGSQTPLHDGSRTPGQ) is 8 X 7 AA approximate tandem repeats of G-S-[QR]-T-P-X-[YQ], motif CTR1. Polar residues predominate over residues 759–790 (RSSTHLRTPMYGSQTPIYGTGSRTPMYGSQTP). Residues 764 to 769 (LRTPMY) form a CTR1-2; approximate repeat. The stretch at 770–776 (GSQTPIY) is one CTR1-3 repeat. Phosphothreonine; by CDK9 is present on residues Thr773 and Thr782. A CTR1-4 repeat occupies 779–785 (GSRTPMY). Residues 786–792 (GSQTPLH) form a CTR1-5 repeat. One copy of the CTR1-6 repeat lies at 794–800 (GSRTPHY). The CTR1-7 repeat unit spans residues 801 to 807 (GSQTPLH). One copy of the CTR1-8 repeat lies at 809–815 (GSRTPGQ). A compositionally biased stretch (acidic residues) spans 832-842 (DEYEFAYDDEP). A CTR2-1 repeat occupies 842–849 (PSPSPQGY). Positions 842-948 (PSPSPQGYGG…ASPSPSPVGY (107 aa)) are 10 X 8 AA approximate tandem repeats of P-[TS]-P-S-P-[QA]-[SG]-Y, motif CTR2. A CTR2-2; approximate repeat occupies 852–860 (TPNPQTPGY). The segment covering 855 to 864 (PQTPGYPEVP) has biased composition (pro residues). The CTR2-3; approximate repeat unit spans residues 861 to 867 (PEVPSPQ). Residues 866–888 (PQVNPQYNPQTPGTPAMYNTDQY) show a composition bias toward polar residues. The stretch at 879–883 (TPAMY) is one CTR2-4; half-length repeat. One copy of the CTR2-5; approximate repeat lies at 894–900 (PSPQGSY). Residues 894 to 909 (PSPQGSYQPSPSPQSY) are compositionally biased toward low complexity. The CTR2-6 repeat unit spans residues 902-909 (PSPSPQSY). Residues 914 to 919 (PSPVGY) form a CTR2-7; approximate repeat. One copy of the CTR2-8 repeat lies at 922 to 928 (THSPASY). One copy of the CTR2-9 repeat lies at 930–937 (PTPSPMAY). One copy of the CTR2-10 repeat lies at 941–948 (PSPSPVGY).

The protein belongs to the SPT5 family. Interacts with SUPT4H1 to form the DSIF complex. DSIF interacts with RNA polymerase II and with the positive transcription elongation factor b complex (P-TEFb complex), which is composed of CDK9 and cyclin-T. Post-translationally, phosphorylated. Phosphorylation by P-TEFb (CDK9) at Thr residues of the C-terminal repeats alleviates transcriptional pausing and promotes transcription elongation.

Its subcellular location is the nucleus. Functionally, component of the DRB sensitivity-inducing factor complex (DSIF complex), which regulates mRNA processing and transcription elongation by RNA polymerase II. DSIF positively regulates mRNA capping by stimulating the mRNA guanylyltransferase activity of RNGTT/CAP1A. DSIF also acts cooperatively with the negative elongation factor complex (NELF complex) to enhance transcriptional pausing at sites proximal to the promoter. Transcriptional pausing may facilitate the assembly of an elongation competent RNA polymerase II complex. DSIF and NELF promote pausing by inhibition of the transcription elongation factor TFIIS/S-II. TFIIS/S-II binds to RNA polymerase II at transcription pause sites and stimulates the weak intrinsic nuclease activity of the enzyme. Cleavage of blocked transcripts by RNA polymerase II promotes the resumption of transcription from the new 3' terminus and may allow repeated attempts at transcription through natural pause sites. Following phosphorylation by CDK9, DSIF can also positively regulate transcriptional elongation. Regulation of transcriptional elongation by this protein is required for the expression of genes which control neuronal development. The sequence is that of Transcription elongation factor SPT5 (supt5h) from Danio rerio (Zebrafish).